The primary structure comprises 323 residues: Transcription factor JunD (323 aa).

Disordered stretches follow at residues 138-173 and 197-221; these read QNQLGGGGGPNGGAAAAGGGGGGGGGGGGELPAPGL and PFAAPPPRLPPPPPPPLKDEPQIVP. A compositionally biased stretch (gly residues) spans 141–167; sequence LGGGGGPNGGAAAAGGGGGGGGGGGGE. Over residues 198-212 the composition is skewed to pro residues; sequence FAAPPPRLPPPPPPP. Residues 242 to 269 form a basic motif region; sequence RIKAERKRLRNRIAASKCRKRKLERISR. Residues 242–305 form the bZIP domain; the sequence is RIKAERKRLR…AQLKQKVLSH (64 aa). The segment at 270-298 is leucine-zipper; sequence LEEKVKSLKSQNTELASTASLLREQVAQL.

Belongs to the bZIP family. Jun subfamily. In terms of assembly, binds DNA as a dimer.

It localises to the nucleus. In Gallus gallus (Chicken), this protein is Transcription factor JunD (JUND).